The following is a 500-amino-acid chain: Probable cytosol aminopeptidase (500 aa).

Positions 265 and 270 each coordinate Mn(2+). The active site involves lysine 277. 3 residues coordinate Mn(2+): aspartate 288, aspartate 347, and glutamate 349. Arginine 351 is an active-site residue.

This sequence belongs to the peptidase M17 family. Mn(2+) serves as cofactor.

It is found in the cytoplasm. The enzyme catalyses Release of an N-terminal amino acid, Xaa-|-Yaa-, in which Xaa is preferably Leu, but may be other amino acids including Pro although not Arg or Lys, and Yaa may be Pro. Amino acid amides and methyl esters are also readily hydrolyzed, but rates on arylamides are exceedingly low.. It carries out the reaction Release of an N-terminal amino acid, preferentially leucine, but not glutamic or aspartic acids.. In terms of biological role, presumably involved in the processing and regular turnover of intracellular proteins. Catalyzes the removal of unsubstituted N-terminal amino acids from various peptides. The sequence is that of Probable cytosol aminopeptidase from Rickettsia felis (strain ATCC VR-1525 / URRWXCal2) (Rickettsia azadi).